The chain runs to 509 residues: Putative thymidine phosphorylase (509 aa).

The protein belongs to the thymidine/pyrimidine-nucleoside phosphorylase family. Type 2 subfamily.

The catalysed reaction is thymidine + phosphate = 2-deoxy-alpha-D-ribose 1-phosphate + thymine. This is Putative thymidine phosphorylase from Chelativorans sp. (strain BNC1).